The primary structure comprises 1810 residues: Trinucleotide repeat-containing gene 6B protein (1810 aa).

The segment covering 1–22 (MQTNEGEVEEESSSQVEQEDFV) has biased composition (acidic residues). Disordered stretches follow at residues 1-221 (MQTN…PNPI), 235-1080 (EEWP…KKQM), 1141-1196 (MRKD…SSPG), and 1293-1329 (ALQQ…NMVP). Positions 33 to 75 (GEESKQEKEQEREEQLMEDKKRKKEDKKKKEATQKVTEQKTKV) form a coiled coil. Composition is skewed to basic and acidic residues over residues 34–52 (EESK…MEDK) and 60–77 (KKKE…KVPE). An interaction with argonaute proteins region spans residues 37-1028 (KQEKEQEREE…AMKPNSKSMQ (992 aa)). Positions 88–106 (AASPIGSSPSPPVNGGNNA) are enriched in low complexity. A compositionally biased stretch (basic and acidic residues) spans 123–139 (MPREVPPRFRCQQDHKV). A compositionally biased stretch (low complexity) spans 165 to 174 (APGANPNNNA). The span at 180-190 (LLQSESGTAPE) shows a compositional bias: polar residues. Composition is skewed to low complexity over residues 207-220 (GPGA…SPNP) and 248-260 (SSEN…SASN). Polar residues-rich tracts occupy residues 261–290 (PGSE…SGNE) and 306–327 (QPPN…TSGQ). 3 stretches are compositionally biased toward low complexity: residues 335–346 (GFSNFNPNSNPS), 363–380 (ETES…GQAS), and 416–425 (NSLNLSSPNP). Positions 438–451 (GNTSRSTDAPSQST) are enriched in polar residues. Low complexity predominate over residues 475-486 (SGQSNSGNNGNN). 4 stretches are compositionally biased toward polar residues: residues 504–528 (GSKS…PQDN), 564–575 (GPNQPNSSTGAW), 611–623 (TGSN…SDSH), and 655–667 (LSNT…QIKQ). A compositionally biased stretch (basic and acidic residues) spans 675 to 688 (EVPRPEGKSDKGTE). Polar residues-rich tracts occupy residues 774 to 783 (QPNQGWTSGK) and 793 to 804 (VKNNNWESSANK). The segment covering 809–824 (WGEGGQNEIGTWGNGG) has biased composition (gly residues). Over residues 846–857 (TGRQPNSWNKQH) the composition is skewed to polar residues. Ser913 carries the phosphoserine modification. 5 stretches are compositionally biased toward polar residues: residues 934–950 (NSYN…NSQG), 964–975 (TGKSASVWSKST), 1004–1027 (ASTT…SKSM), 1057–1072 (TAGS…SASW), and 1175–1195 (GNST…SSSP). Residues 1191–1700 (LSSSPGLRAQ…LAEFATEDEV (510 aa)) form a silencing domain; interaction with CNOT1 and PAN3 region. Over residues 1295 to 1307 (QQQQQQQQQQQRQ) the composition is skewed to low complexity. Residue Ser1409 is modified to Phosphoserine. Thr1426 carries the phosphothreonine modification. A Phosphoserine modification is found at Ser1438. Residue Thr1441 is modified to Phosphothreonine. The PABPC1-interacting motif-2 (PAM2) stretch occupies residues 1449–1467 (SNASWPPEFQPGVPWKGIQ). The disordered stretch occupies residues 1568 to 1619 (SSRNTTPLTRPPPGLTNPKPASPWSSTAPRSVRGWGTQDSRIASASTWSDGG). Residues 1604–1617 (TQDSRIASASTWSD) are compositionally biased toward polar residues. An RRM domain is found at 1625-1697 (YWLVLHNLTP…TTILAEFATE (73 aa)). 2 disordered regions span residues 1706–1740 (QAQP…GPAL) and 1786–1810 (EDPH…SDSI). The span at 1722-1733 (GWQSLETSQNQA) shows a compositional bias: polar residues. Residues 1792–1801 (GSPAPLLPGD) show a composition bias toward low complexity. Ser1793 and Ser1809 each carry phosphoserine.

The protein belongs to the GW182 family. In terms of assembly, interacts with AGO1, AGO2, AGO3 and AGO4. Interacts with CNOT1; the interaction mediates the association with the CCR4-NOT complex. Interacts with PAN3; the interaction mediates the association with the PAN complex. Interacts with MOV10; the interaction is direct and RNA-dependent.

The protein localises to the cytoplasm. It localises to the P-body. Functionally, plays a role in RNA-mediated gene silencing by both micro-RNAs (miRNAs) and short interfering RNAs (siRNAs). Required for miRNA-dependent translational repression and siRNA-dependent endonucleolytic cleavage of complementary mRNAs by argonaute family proteins. As scaffolding protein associates with argonaute proteins bound to partially complementary mRNAs and simultaneously can recruit CCR4-NOT and PAN deadenylase complexes. This chain is Trinucleotide repeat-containing gene 6B protein (Tnrc6b), found in Mus musculus (Mouse).